Consider the following 272-residue polypeptide: Outer surface protein A (272 aa).

Positions 1-16 (MKKYLLGIGLILALIA) are cleaved as a signal peptide. C17 carries N-palmitoyl cysteine lipidation. A lipid anchor (S-diacylglycerol cysteine) is attached at C17.

It belongs to the OspA lipoprotein family.

The protein resides in the cell outer membrane. The protein localises to the cell surface. The chain is Outer surface protein A from Borreliella burgdorferi (Lyme disease spirochete).